Reading from the N-terminus, the 603-residue chain is Myotubularin (603 aa).

Residues 1–13 show a composition bias toward polar residues; that stretch reads MASASTSKYNSHS. The segment at 1–25 is disordered; the sequence is MASASTSKYNSHSLENESIKRTSRD. A phosphoserine mark is found at Ser-13 and Ser-18. Positions 14–25 are enriched in basic and acidic residues; the sequence is LENESIKRTSRD. Positions 29 to 97 constitute a GRAM domain; it reads RDLTEAVPRL…GVISRIEKMG (69 aa). The 376-residue stretch at 163 to 538 folds into the Myotubularin phosphatase domain; sequence GWTVYNPVEE…RHLELWVNYY (376 aa). Residues Asn-288, Asn-313, and Ile-314 each coordinate a 1,2-diacyl-sn-glycero-3-phospho-(1D-myo-inositol-3,5-bisphosphate). A 1,2-diacyl-sn-glycero-3-phospho-(1D-myo-inositol-3-phosphate) contacts are provided by Asn-288, Asn-313, and Ile-314. The active-site Phosphocysteine intermediate is the Cys-375. A 1,2-diacyl-sn-glycero-3-phospho-(1D-myo-inositol-3,5-bisphosphate) contacts are provided by Ser-376, Asp-377, Gly-378, Trp-379, Asp-380, Arg-381, Lys-417, and Arg-421. 6 residues coordinate a 1,2-diacyl-sn-glycero-3-phospho-(1D-myo-inositol-3-phosphate): Ser-376, Asp-377, Gly-378, Trp-379, Asp-380, and Arg-381. Position 421 (Arg-421) interacts with a 1,2-diacyl-sn-glycero-3-phospho-(1D-myo-inositol-3-phosphate). Thr-495 is subject to Phosphothreonine. The tract at residues 579–603 is disordered; the sequence is SAKLSDPPTSPSSPSQMMPHVQTHF. Residue Ser-588 is modified to Phosphoserine.

This sequence belongs to the protein-tyrosine phosphatase family. Non-receptor class myotubularin subfamily. As to quaternary structure, heterodimer with MTMR12. Interacts with KMT2A/MLL1 (via SET domain). Interacts with DES in skeletal muscle but not in cardiac muscle. Interacts with SPEG.

It is found in the cytoplasm. Its subcellular location is the cell membrane. It localises to the cell projection. The protein localises to the filopodium. The protein resides in the ruffle. It is found in the late endosome. Its subcellular location is the myofibril. It localises to the sarcomere. The catalysed reaction is a 1,2-diacyl-sn-glycero-3-phospho-(1D-myo-inositol-3-phosphate) + H2O = a 1,2-diacyl-sn-glycero-3-phospho-(1D-myo-inositol) + phosphate. It catalyses the reaction a 1,2-diacyl-sn-glycero-3-phospho-(1D-myo-inositol-3,5-bisphosphate) + H2O = a 1,2-diacyl-sn-glycero-3-phospho-(1D-myo-inositol-5-phosphate) + phosphate. It carries out the reaction 1,2-dioctanoyl-sn-glycero-3-phospho-(1-D-myo-inositol-3-phosphate) + H2O = 1,2-dioctanoyl-sn-glycero-3-phospho-(1D-myo-inositol) + phosphate. The enzyme catalyses 1,2-dioctanoyl-sn-glycero-3-phospho-(1D-myo-inositol-3,5-bisphosphate) + H2O = 1,2-dioctanoyl-sn-glycero-3-phospho-(1D-myo-inositol-5-phosphate) + phosphate. The catalysed reaction is 1,2-dihexadecanoyl-sn-glycero-3-phospho-(1D-myo-inositol-3,5-phosphate) + H2O = 1,2-dihexadecanoyl-sn-glycero-3-phospho-(1D-myo-inositol-5-phosphate) + phosphate. With respect to regulation, allosterically activated by phosphatidylinositol 5-phosphate (PI5P). Lipid phosphatase which dephosphorylates phosphatidylinositol 3-monophosphate (PI3P) and phosphatidylinositol 3,5-bisphosphate (PI(3,5)P2). Has also been shown to dephosphorylate phosphotyrosine- and phosphoserine-containing peptides. Negatively regulates EGFR degradation through regulation of EGFR trafficking from the late endosome to the lysosome. Plays a role in vacuolar formation and morphology. Regulates desmin intermediate filament assembly and architecture. Plays a role in mitochondrial morphology and positioning. Required for skeletal muscle maintenance but not for myogenesis. In skeletal muscles, stabilizes MTMR12 protein levels. The chain is Myotubularin from Pongo abelii (Sumatran orangutan).